A 929-amino-acid chain; its full sequence is Pyruvate dehydrogenase E1 component (929 aa).

An Isoglutamyl lysine isopeptide (Lys-Gln) (interchain with Q-Cter in protein Pup) cross-link involves residue K375.

As to quaternary structure, homodimer. Part of the PDH complex, consisting of multiple copies of AceE (E1), DlaT (E2) and Lpd (E3). It depends on Mg(2+) as a cofactor. Requires thiamine diphosphate as cofactor.

The enzyme catalyses N(6)-[(R)-lipoyl]-L-lysyl-[protein] + pyruvate + H(+) = N(6)-[(R)-S(8)-acetyldihydrolipoyl]-L-lysyl-[protein] + CO2. Its function is as follows. Component of the pyruvate dehydrogenase (PDH) complex, that catalyzes the overall conversion of pyruvate to acetyl-CoA and CO(2). AceE has reductase activity with pyruvate but does not react with 2-oxoglutarate. This is Pyruvate dehydrogenase E1 component (aceE) from Mycolicibacterium smegmatis (strain ATCC 700084 / mc(2)155) (Mycobacterium smegmatis).